A 269-amino-acid chain; its full sequence is 4-hydroxy-tetrahydrodipicolinate reductase (269 aa).

NAD(+) contacts are provided by residues 8–13 (GAAGRM) and Glu-34. Arg-35 contributes to the NADP(+) binding site. NAD(+) contacts are provided by residues 98–100 (GTT) and 122–125 (APNY). Catalysis depends on His-155, which acts as the Proton donor/acceptor. Residue His-156 coordinates (S)-2,3,4,5-tetrahydrodipicolinate. Lys-159 serves as the catalytic Proton donor. 165–166 (GT) contributes to the (S)-2,3,4,5-tetrahydrodipicolinate binding site.

It belongs to the DapB family.

Its subcellular location is the cytoplasm. The catalysed reaction is (S)-2,3,4,5-tetrahydrodipicolinate + NAD(+) + H2O = (2S,4S)-4-hydroxy-2,3,4,5-tetrahydrodipicolinate + NADH + H(+). It carries out the reaction (S)-2,3,4,5-tetrahydrodipicolinate + NADP(+) + H2O = (2S,4S)-4-hydroxy-2,3,4,5-tetrahydrodipicolinate + NADPH + H(+). Its pathway is amino-acid biosynthesis; L-lysine biosynthesis via DAP pathway; (S)-tetrahydrodipicolinate from L-aspartate: step 4/4. Its function is as follows. Catalyzes the conversion of 4-hydroxy-tetrahydrodipicolinate (HTPA) to tetrahydrodipicolinate. The protein is 4-hydroxy-tetrahydrodipicolinate reductase of Aliivibrio fischeri (strain ATCC 700601 / ES114) (Vibrio fischeri).